We begin with the raw amino-acid sequence, 144 residues long: Superoxide dismutase [Mn], mitochondrial (144 aa).

Residues His-10, His-58, and Asp-143 each coordinate Mn(2+).

Belongs to the iron/manganese superoxide dismutase family. In terms of assembly, homotetramer. Requires Mn(2+) as cofactor.

It is found in the mitochondrion matrix. The catalysed reaction is 2 superoxide + 2 H(+) = H2O2 + O2. Destroys superoxide anion radicals which are normally produced within the cells and which are toxic to biological systems. In Eptatretus stoutii (Pacific hagfish), this protein is Superoxide dismutase [Mn], mitochondrial.